The following is a 435-amino-acid chain: Zinc finger CCCH domain-containing protein 16 (435 aa).

The C3H1-type zinc-finger motif lies at Met1–Gln27. The tract at residues Arg2–Ala88 is 6 X 2 AA repeats of F-G. Disordered stretches follow at residues Pro25–Cys105 and Thr205–Asn374. A run of 2 repeats spans residues Phe34–Gly35 and Phe36–Gly37. Residues Gln39–Asn51 are compositionally biased toward low complexity. 2 consecutive repeat copies span residues Phe56–Gly57 and Phe58–Gly59. Over residues Gly63 to Arg77 the composition is skewed to polar residues. Residues Thr78–Gln99 are compositionally biased toward low complexity. 2 stretches are compositionally biased toward polar residues: residues Thr205–Pro320 and Ser328–Lys339. 2 tandem repeats follow at residues Phe343–Gly344 and Phe359–Gly360. The span at Thr351–Asn374 shows a compositional bias: polar residues.

Part of the nuclear pore complex (NPC). The NPC has an eight-fold symmetrical structure comprising a central transport channel and two rings, the cytoplasmic and nuclear rings, to which eight filaments are attached. The cytoplasmic filaments have loose ends, while the nuclear filaments are joined in a distal ring, forming a nuclear basket. NPCs are highly dynamic in configuration and composition, and can be devided in 3 subcomplexes, the NUP62 subcomplex, the NUP107-160 subcomplex and the NUP93 subcomplex, containing approximately 30 different nucleoporin proteins.

Its subcellular location is the nucleus envelope. It localises to the nucleus. The protein resides in the nuclear pore complex. The chain is Zinc finger CCCH domain-containing protein 16 from Arabidopsis thaliana (Mouse-ear cress).